We begin with the raw amino-acid sequence, 145 residues long: Cuticle protein 7 (145 aa).

The Chitin-binding type R&amp;R domain maps to 41–114; that stretch reads PVNVATSYHA…VASNALPVGP (74 aa).

This Blaberus craniifer (Death's head cockroach) protein is Cuticle protein 7.